The chain runs to 298 residues: Probable GTP 3',8-cyclase (298 aa).

In terms of domain architecture, Radical SAM core spans 4–227 (RYGREIRSFR…MQNRKKYLID (224 aa)). Residue Arg13 coordinates GTP. Residues Cys20 and Cys24 each coordinate [4Fe-4S] cluster. Tyr26 serves as a coordination point for S-adenosyl-L-methionine. Position 27 (Cys27) interacts with [4Fe-4S] cluster. Residue Lys61 coordinates GTP. Gly65 is a binding site for S-adenosyl-L-methionine. Thr91 serves as a coordination point for GTP. Ser115 contacts S-adenosyl-L-methionine. Lys152 is a binding site for GTP. Cys243 and Cys246 together coordinate [4Fe-4S] cluster. 248 to 250 (RIR) serves as a coordination point for GTP. A [4Fe-4S] cluster-binding site is contributed by Cys260.

It belongs to the radical SAM superfamily. MoaA family. [4Fe-4S] cluster is required as a cofactor.

It carries out the reaction GTP + AH2 + S-adenosyl-L-methionine = (8S)-3',8-cyclo-7,8-dihydroguanosine 5'-triphosphate + 5'-deoxyadenosine + L-methionine + A + H(+). It functions in the pathway cofactor biosynthesis; molybdopterin biosynthesis. Its function is as follows. Catalyzes the cyclization of GTP to (8S)-3',8-cyclo-7,8-dihydroguanosine 5'-triphosphate. The protein is Probable GTP 3',8-cyclase of Methanococcus maripaludis (strain C5 / ATCC BAA-1333).